The sequence spans 517 residues: MDIIGGQHLRQMWDDLADVYGHKTALICESSGGVVNRYSYLELNQEINRTANLFYTLGIRKGDKVALHLDNCPEFIFCWFGLAKIGAIMVPINARLLREESAWILQNSQACLLVTSAQFYPMYQQIQQEDATQLRHICLTDVALPADDGVSSFTQLKNQQPATLCYAPPLSTDDTAEILFTSGTTSRPKGVVITHYNLRFAGYYSAWQCALRDDDVYLTVMPAFHIDCQCTAAMAAFSAGATFVLVEKYSARAFWGQAQKYRATITECIPMMIRTLMVQPPSANDRQHRLREVMFYLNLSEQEKDAFCERFGVRLLTSYGMTETIVGIIGDRPGDKRRWPSIGRAGFCYEAEIRDDHNRPLPAGEIGEICIKGVPGKTIFKEYFLNPKATAKVLEADGWLHTGDTGYCDEEGFFYFVDRRCNMIKRGGENVSCVELENIIATHPKIQDIVVVGIKDSIRDEAIKAFVVLNEGETLSEEEFFRFCEQNMAKFKVPSYLEIRKDLPRNCSGKIIRKNLK.

It belongs to the ATP-dependent AMP-binding enzyme family.

The enzyme catalyses 4-(trimethylamino)butanoate + ATP + CoA = 4-(trimethylamino)butanoyl-CoA + AMP + diphosphate. The catalysed reaction is crotonobetaine + ATP + CoA = crotonobetainyl-CoA + AMP + diphosphate. It catalyses the reaction (R)-carnitine + ATP + CoA = (R)-carnitinyl-CoA + AMP + diphosphate. Its pathway is amine and polyamine metabolism; carnitine metabolism. Catalyzes the transfer of CoA to carnitine, generating the initial carnitinyl-CoA needed for the CaiB reaction cycle. Also has activity toward crotonobetaine and gamma-butyrobetaine. The sequence is that of Crotonobetaine/carnitine--CoA ligase from Escherichia coli O139:H28 (strain E24377A / ETEC).